Consider the following 82-residue polypeptide: Ranatensin (82 aa).

Positions 1–27 (MTTIPAIGILPIDFLTILLLFSFISHS) are cleaved as a signal peptide. A propeptide spanning residues 28-47 (VCVEFAEDAGELDKSNAFRR) is cleaved from the precursor. Met58 is modified (methionine amide). Positions 62–82 (SLSDDTEQATMYSSRFVESTS) are excised as a propeptide.

It belongs to the bombesin/neuromedin-B/ranatensin family. Expressed by the skin glands.

It is found in the secreted. The protein is Ranatensin of Lithobates pipiens (Northern leopard frog).